We begin with the raw amino-acid sequence, 249 residues long: Triosephosphate isomerase (249 aa).

Positions 12 and 14 each coordinate substrate. Lys14 carries the N6-acetyllysine modification. A 3'-nitrotyrosine modification is found at Tyr68. Ser80 and Ser106 each carry phosphoserine. Lys142 is covalently cross-linked (Glycyl lysine isopeptide (Lys-Gly) (interchain with G-Cter in SUMO1)). N6-succinyllysine is present on Lys149. Lys156 is subject to N6-acetyllysine; alternate. Lys156 is modified (N6-succinyllysine; alternate). Ser159 is modified (phosphoserine). Glu166 acts as the Proton acceptor in catalysis. Position 173 is a phosphothreonine (Thr173). N6-acetyllysine; alternate is present on Lys194. Lys194 carries the post-translational modification N6-succinyllysine; alternate. Lys194 bears the N6-methyllysine; alternate mark. Position 198 is a phosphoserine (Ser198). Tyr209 is modified (3'-nitrotyrosine). Ser212 carries the phosphoserine modification. Phosphothreonine is present on Thr214. At Ser223 the chain carries Phosphoserine. Lys238 bears the N6-acetyllysine mark.

Belongs to the triosephosphate isomerase family. In terms of assembly, homodimer.

It is found in the cytoplasm. The catalysed reaction is D-glyceraldehyde 3-phosphate = dihydroxyacetone phosphate. The enzyme catalyses dihydroxyacetone phosphate = methylglyoxal + phosphate. It participates in carbohydrate biosynthesis; gluconeogenesis. It functions in the pathway carbohydrate degradation; glycolysis; D-glyceraldehyde 3-phosphate from glycerone phosphate: step 1/1. In terms of biological role, triosephosphate isomerase is an extremely efficient metabolic enzyme that catalyzes the interconversion between dihydroxyacetone phosphate (DHAP) and D-glyceraldehyde-3-phosphate (G3P) in glycolysis and gluconeogenesis. Its function is as follows. It is also responsible for the non-negligible production of methylglyoxal a reactive cytotoxic side-product that modifies and can alter proteins, DNA and lipids. This Mesocricetus auratus (Golden hamster) protein is Triosephosphate isomerase.